A 155-amino-acid chain; its full sequence is uncharacterized protein (155 aa).

Belongs to the IIV-6 145L family.

This is an uncharacterized protein from Acheta domesticus (House cricket).